Reading from the N-terminus, the 50-residue chain is Tubulin alpha chain (50 aa).

A GTP-binding site is contributed by asparagine 28. Glutamate 40 is a catalytic residue.

The protein belongs to the tubulin family. As to quaternary structure, dimer of alpha and beta chains. A typical microtubule is a hollow water-filled tube with an outer diameter of 25 nm and an inner diameter of 15 nM. Alpha-beta heterodimers associate head-to-tail to form protofilaments running lengthwise along the microtubule wall with the beta-tubulin subunit facing the microtubule plus end conferring a structural polarity. Microtubules usually have 13 protofilaments but different protofilament numbers can be found in some organisms and specialized cells. It depends on Mg(2+) as a cofactor.

It localises to the cytoplasm. The protein localises to the cytoskeleton. It catalyses the reaction GTP + H2O = GDP + phosphate + H(+). In terms of biological role, tubulin is the major constituent of microtubules, a cylinder consisting of laterally associated linear protofilaments composed of alpha- and beta-tubulin heterodimers. Microtubules grow by the addition of GTP-tubulin dimers to the microtubule end, where a stabilizing cap forms. Below the cap, tubulin dimers are in GDP-bound state, owing to GTPase activity of alpha-tubulin. The sequence is that of Tubulin alpha chain from Populus euphratica (Euphrates poplar).